A 405-amino-acid chain; its full sequence is Type II secretion system protein F (405 aa).

The Cytoplasmic segment spans residues 1 to 168 (MAAFEYLALD…QRQQSRQKIQ (168 aa)). 3 residues coordinate Ca(2+): Thr-97, Glu-151, and Asp-155. A helical transmembrane segment spans residues 169-189 (LALLYPVILMVASLAIVGFLL). Over 190–219 (GYVVPDVVRVFIDSGQTLPLLTRVLIGVSD) the chain is Periplasmic. Residues 220–239 (WVKAWGALAFVAAIGGVIGF) traverse the membrane as a helical segment. Topologically, residues 240–376 (RYALRKDAFR…IGLMVGLFEP (137 aa)) are cytoplasmic. The helical transmembrane segment at 377–397 (FMLIFMGAVVLVIVLAILLPI) threads the bilayer. Topologically, residues 398–405 (LSLNQLVG) are periplasmic.

It belongs to the GSP F family. In terms of assembly, type II secretion system is composed of four main components: the outer membrane complex, the inner membrane complex, the cytoplasmic secretion ATPase and the periplasm-spanning pseudopilus. Homodimer. Interacts with XcpR/GspE and XcpY/GspL components.

It localises to the cell inner membrane. In terms of biological role, component of the type II secretion system inner membrane complex required for the energy-dependent secretion of extracellular factors such as proteases and toxins from the periplasm. The polypeptide is Type II secretion system protein F (xcpS) (Pseudomonas aeruginosa (strain ATCC 15692 / DSM 22644 / CIP 104116 / JCM 14847 / LMG 12228 / 1C / PRS 101 / PAO1)).